The sequence spans 627 residues: E3 ubiquitin-protein ligase DTX1 (627 aa).

WWE domains follow at residues 14–94 (GLGF…PVRR) and 95–171 (NFYD…RLRR). 3 disordered regions span residues 222–254 (QRRKAPIAPAAPPAPPPPPPPLPPGGPPGALVV), 269–327 (PATG…ALPV), and 368–398 (PPVSKSDVKPVPGVPGVCRKTKKKHLKKSKN). Composition is skewed to pro residues over residues 230–248 (PAAPPAPPPPPPPLPPGGP) and 275–287 (EPAPPPGVPPRSP). The short motif at 240-243 (PPPL) is the SH3-binding element. A compositionally biased stretch (polar residues) spans 296–314 (PGQNNLSRPGPQRSTSVSA). The span at 386-396 (RKTKKKHLKKS) shows a compositional bias: basic residues. The RING-type zinc-finger motif lies at 418 to 479 (CTICMERLVT…DGSLQCPTCK (62 aa)).

The protein belongs to the Deltex family. As to quaternary structure, homodimer. May form a heterodimer with other members of the Deltex family. Interacts with NOTCH1 via its N-terminal region and EIF3F, the interaction is required for NOTCH1 deubiquitination. Interacts with EP300. Forms a heterodimer with BBAP; the heterodimerization leading to an increase of in vitro ubiquitin ligase activity. Interacts with ITCH. In terms of processing, ubiquitinated; undergoes 'Lys-29'-linked polyubiquitination catalyzed by ITCH. Predominantly expressed in the brain and testis. Weakly expressed in the thymus, spleen and ovary. Predominantly expressed in regions containing post-mitotic differentiating neurons.

Its subcellular location is the cytoplasm. It localises to the nucleus. The catalysed reaction is S-ubiquitinyl-[E2 ubiquitin-conjugating enzyme]-L-cysteine + [acceptor protein]-L-lysine = [E2 ubiquitin-conjugating enzyme]-L-cysteine + N(6)-ubiquitinyl-[acceptor protein]-L-lysine.. Its pathway is protein modification; protein ubiquitination. Regulator of Notch signaling, a signaling pathway involved in cell-cell communications that regulates a broad spectrum of cell-fate determinations. Mainly acts as a positive regulator of Notch, but it also acts as a negative regulator, depending on the developmental and cell context. Mediates the antineural activity of Notch, possibly by inhibiting the transcriptional activation mediated by MATCH1. Involved in neurogenesis, lymphogenesis and myogenesis, and may also be involved in MZB (Marginal zone B) cell differentiation. Promotes B-cell development at the expense of T-cell development, suggesting that it can antagonize NOTCH1. Functions as an ubiquitin ligase protein in vivo, mediating ubiquitination and promoting degradation of MEKK1, suggesting that it may regulate the Notch pathway via some ubiquitin ligase activity. In Mus musculus (Mouse), this protein is E3 ubiquitin-protein ligase DTX1 (Dtx1).